Reading from the N-terminus, the 218-residue chain is Probable transaldolase (218 aa).

The Schiff-base intermediate with substrate role is filled by Lys83.

It belongs to the transaldolase family. Type 3B subfamily.

It localises to the cytoplasm. The enzyme catalyses D-sedoheptulose 7-phosphate + D-glyceraldehyde 3-phosphate = D-erythrose 4-phosphate + beta-D-fructose 6-phosphate. It participates in carbohydrate degradation; pentose phosphate pathway; D-glyceraldehyde 3-phosphate and beta-D-fructose 6-phosphate from D-ribose 5-phosphate and D-xylulose 5-phosphate (non-oxidative stage): step 2/3. In terms of biological role, transaldolase is important for the balance of metabolites in the pentose-phosphate pathway. The sequence is that of Probable transaldolase from Thermotoga sp. (strain RQ2).